A 150-amino-acid polypeptide reads, in one-letter code: Auxin-binding protein 5 (150 aa).

The N-terminal stretch at 1 to 41 (MVRRRPATGAAQRPQLAAVGRGLLLASVLAAAASSLPVAES) is a signal peptide. Zn(2+) contacts are provided by H98, H100, and E104. N136 is a glycosylation site (N-linked (GlcNAc...) asparagine). H147 serves as a coordination point for Zn(2+).

In terms of assembly, homodimer.

Its subcellular location is the endoplasmic reticulum lumen. Functionally, this is probably a receptor for the plant hormone auxin. In Zea mays (Maize), this protein is Auxin-binding protein 5 (ABP5).